We begin with the raw amino-acid sequence, 146 residues long: SSDHCGPLQRLKVKQQWAKAYGVGHERVELGIALWKSMFAQDNDARDLFKRVHGEDVHSPAFEAHMARVFNGLDRVISSLTDEPVLNAQLEHLRQQHIKLGITGHMFNLMRTGLAYVLPAQLGRCFDKEAWAACWDEVIYPGIKHD.

A Globin domain is found at 4–146 (HCGPLQRLKV…EVIYPGIKHD (143 aa)). A disulfide bridge links Cys-5 with Cys-134. His-97 serves as a coordination point for heme b.

Belongs to the globin family. In terms of assembly, disulfide bonded trimer of chains IIA, IIB, and IIC.

This chain is Extracellular globin-2A, found in Tylorrhynchus heterochetus (Japanese palolo worm).